The following is a 791-amino-acid chain: Phenylalanine--tRNA ligase beta subunit (791 aa).

The 109-residue stretch at 39–147 folds into the tRNA-binding domain; sequence GDALGQVVVA…DDAPVGQALA (109 aa). The B5 domain maps to 400 to 475; sequence PQPASILLRR…RIHGYDRVPT (76 aa). Mg(2+) is bound by residues Asp453, Asp459, Glu462, and Glu463. Positions 697–790 constitute an FDX-ACB domain; sequence SRYPSMRRDL…IEREHRARIR (94 aa).

It belongs to the phenylalanyl-tRNA synthetase beta subunit family. Type 1 subfamily. Tetramer of two alpha and two beta subunits. Mg(2+) is required as a cofactor.

The protein localises to the cytoplasm. It catalyses the reaction tRNA(Phe) + L-phenylalanine + ATP = L-phenylalanyl-tRNA(Phe) + AMP + diphosphate + H(+). The sequence is that of Phenylalanine--tRNA ligase beta subunit from Xanthomonas campestris pv. campestris (strain 8004).